We begin with the raw amino-acid sequence, 236 residues long: Transcriptional activator protein SolR (236 aa).

The HTH luxR-type domain occupies 169-234; the sequence is VPESSAALTA…QAVVKAIAIG (66 aa). Residues 193 to 212 constitute a DNA-binding region (H-T-H motif); the sequence is AYEIGQILRISERTVNFHVN.

The protein belongs to the autoinducer-regulated transcriptional regulatory protein family.

The protein is Transcriptional activator protein SolR (solR) of Ralstonia nicotianae (strain ATCC BAA-1114 / GMI1000) (Ralstonia solanacearum).